The following is a 408-amino-acid chain: Elongation factor Tu, chloroplastic (408 aa).

Residues 10 to 213 (KPHVNIGTIG…KVDEYIPTPE (204 aa)) form the tr-type G domain. The G1 stretch occupies residues 19-26 (GHVDHGKT). 19 to 26 (GHVDHGKT) provides a ligand contact to GTP. Thr-26 contributes to the Mg(2+) binding site. The segment at 59-63 (GITIN) is G2. The segment at 80–83 (DCPG) is G3. GTP is bound by residues 80 to 84 (DCPGH) and 135 to 138 (NKAD). The segment at 135 to 138 (NKAD) is G4. Residues 173–175 (SAL) form a G5 region.

Belongs to the TRAFAC class translation factor GTPase superfamily. Classic translation factor GTPase family. EF-Tu/EF-1A subfamily.

The protein resides in the plastid. The protein localises to the chloroplast. The catalysed reaction is GTP + H2O = GDP + phosphate + H(+). Functionally, GTP hydrolase that promotes the GTP-dependent binding of aminoacyl-tRNA to the A-site of ribosomes during protein biosynthesis. The protein is Elongation factor Tu, chloroplastic (tufA) of Guillardia theta (Cryptophyte).